A 316-amino-acid chain; its full sequence is Ribose-phosphate pyrophosphokinase (316 aa).

ATP contacts are provided by residues Asp41–Glu43 and Arg100–Gln101. Residues His134 and Asp174 each coordinate Mg(2+). Lys197 is an active-site residue. Residues Arg199, Asp223, and Asp227–Thr231 each bind D-ribose 5-phosphate.

This sequence belongs to the ribose-phosphate pyrophosphokinase family. Class I subfamily. In terms of assembly, homohexamer. Mg(2+) serves as cofactor.

The protein resides in the cytoplasm. It catalyses the reaction D-ribose 5-phosphate + ATP = 5-phospho-alpha-D-ribose 1-diphosphate + AMP + H(+). The protein operates within metabolic intermediate biosynthesis; 5-phospho-alpha-D-ribose 1-diphosphate biosynthesis; 5-phospho-alpha-D-ribose 1-diphosphate from D-ribose 5-phosphate (route I): step 1/1. Involved in the biosynthesis of the central metabolite phospho-alpha-D-ribosyl-1-pyrophosphate (PRPP) via the transfer of pyrophosphoryl group from ATP to 1-hydroxyl of ribose-5-phosphate (Rib-5-P). This chain is Ribose-phosphate pyrophosphokinase, found in Caldanaerobacter subterraneus subsp. tengcongensis (strain DSM 15242 / JCM 11007 / NBRC 100824 / MB4) (Thermoanaerobacter tengcongensis).